The primary structure comprises 257 residues: Asnovolin H dehydrogenase nvfC (257 aa).

The chain crosses the membrane as a helical span at residues 7–26 (YVLIITGSASGIGLATATIA). Residue Ile11 participates in NADP(+) binding. 3 N-linked (GlcNAc...) asparagine glycosylation sites follow: Asn57, Asn92, and Asn110. The NADP(+) site is built by Arg119, Tyr151, Lys155, and Val184. The active-site Proton donor is the Tyr151. Lys155 functions as the Lowers pKa of active site Tyr in the catalytic mechanism.

Belongs to the short-chain dehydrogenases/reductases (SDR) family.

It localises to the membrane. It carries out the reaction asnovolin H + A = chermesin D + AH2. It participates in secondary metabolite biosynthesis; terpenoid biosynthesis. Functionally, short chain dehydrogenase; part of the gene cluster that mediates the biosynthesis of novofumigatonin, a heavily oxygenated meroterpenoid containing a unique orthoester moiety. The first step of the pathway is the synthesis of 3,5-dimethylorsellinic acid (DMOA) by the polyketide synthase nvfA via condensation of one acetyl-CoA starter unit with 3 malonyl-CoA units and 2 methylations. DMOA is then converted to farnesyl-DMOA by the farnesyltransferase nvfB. Epoxydation by FAD-dependent monooxygenase nvfK, followed by a protonation-initiated cyclization catalyzed by the terpene cyclase nvfL leads to the production of asnavolin H. The short chain dehydrogenase nvfC then as a 3-OH dehydrogenase of asnovolin H to yield chemesin D. There are two branches to synthesize asnovolin A from chemesin D. In one branch, chemesin D undergoes Baeyer-Villiger oxidation by nvfH, methylation by nvfJ, and enoyl reduction by the nvfM D enoylreductase that reduces the double bond between C-5'and C-6', to form respectively asnovolin I, asnovolin K, and asnovolin A. In the other branch, the methylation precedes the Baeyer-Villiger oxidation and the enoyl reduction to yield asnovolin A via the asnovolin J intermediate. Asnovolin A is further converted to fumigatonoid A by the Fe(II)/2-oxoglutarate-dependent dioxygenase nvfI that catalyzes an endoperoxidation reaction. The alpha/beta hydrolase nvfD then acts as an epimerase that converts fumigatonoid A to its C-5' epimer, which then undergoes spontaneous or nvfD-catalyzed lactonization. The following step utilizes the ketoreductase nvfG to produce fumigatonoid B. The dioxygenase nvfE further converts fumigatonoid B into fumigatonoid C. Finally the Fe(II)/2-oxoglutarate-dependent dioxygenase nvfF catalyzes two rounds of oxidation to transform fumigatonoid C into the end product, novofumigatonin A. The protein is Asnovolin H dehydrogenase nvfC of Aspergillus novofumigatus (strain IBT 16806).